The chain runs to 357 residues: Protein-arginine kinase (357 aa).

The 232-residue stretch at 24 to 255 folds into the Phosphagen kinase C-terminal domain; it reads IVISTRLRIA…RQIIEQERVA (232 aa). ATP contacts are provided by residues 27–31, histidine 92, arginine 126, 177–181, and 208–213; these read STRLR, RASVM, and RGIYGE. Residues 338–343 carry the RDXXRA motif of the pArg binding pocket involved in allosteric regulation motif; sequence RDERRA.

This sequence belongs to the ATP:guanido phosphotransferase family.

The catalysed reaction is L-arginyl-[protein] + ATP = N(omega)-phospho-L-arginyl-[protein] + ADP + H(+). Its activity is regulated as follows. Appears to be allosterically activated by the binding of pArg-containing polypeptides to the pArg-binding pocket localized in the C-terminal domain of McsB. Its function is as follows. Catalyzes the specific phosphorylation of arginine residues in proteins. In Brevibacillus brevis (strain 47 / JCM 6285 / NBRC 100599), this protein is Protein-arginine kinase.